The primary structure comprises 351 residues: Protein Wnt-4 (351 aa).

The N-terminal stretch at 1 to 22 (MSPRSCLRSLRLLVFAVFSAAA) is a signal peptide. 11 disulfide bridges follow: Cys-78/Cys-89, Cys-128/Cys-136, Cys-138/Cys-155, Cys-206/Cys-220, Cys-208/Cys-215, Cys-280/Cys-311, Cys-296/Cys-306, Cys-310/Cys-350, Cys-326/Cys-341, Cys-328/Cys-338, and Cys-333/Cys-334. Residue Asn-88 is glycosylated (N-linked (GlcNAc...) asparagine). Ser-212 carries O-palmitoleoyl serine; by PORCN lipidation. A glycan (N-linked (GlcNAc...) asparagine) is linked at Asn-297.

The protein belongs to the Wnt family. Interacts with PORCN. Interacts with PKD1. In terms of processing, palmitoleoylation is required for efficient binding to frizzled receptors. Depalmitoleoylation leads to Wnt signaling pathway inhibition. In adults in lung and brain.

Its subcellular location is the secreted. It is found in the extracellular space. The protein resides in the extracellular matrix. In terms of biological role, ligand for members of the frizzled family of seven transmembrane receptors. Plays an important role in the embryonic development of the urogenital tract and the lung. Required for normal mesenchyme to epithelium transition during embryonic kidney development. Required for the formation of early epithelial renal vesicles during kidney development. Required for normal formation of the Mullerian duct in females, and normal levels of oocytes in the ovaries. Required for normal down-regulation of 3 beta-hydroxysteroid dehydrogenase in the ovary. Required for normal lung development and for normal patterning of trachael cartilage rings. The protein is Protein Wnt-4 (Wnt4) of Mus musculus (Mouse).